Consider the following 282-residue polypeptide: Putative hydrolase BceJ2315_61450 (282 aa).

Positions 124, 126, and 155 each coordinate Mg(2+).

Belongs to the FAH family. Requires Mg(2+) as cofactor.

This is Putative hydrolase BceJ2315_61450 from Burkholderia cenocepacia (strain ATCC BAA-245 / DSM 16553 / LMG 16656 / NCTC 13227 / J2315 / CF5610) (Burkholderia cepacia (strain J2315)).